Reading from the N-terminus, the 71-residue chain is Probable ribosome maturation protein RlbA (71 aa).

An S4 RNA-binding domain is found at 12–69 (ITLGQFLKLADVIQSGGMAKWFLSEHEVLVNDEPDNRRGRKLYVGDVVEIEGFGSFQV).

May assist in the assembly of the 50S subunit. The polypeptide is Probable ribosome maturation protein RlbA (Bacillus subtilis (strain 168)).